The primary structure comprises 456 residues: Exodeoxyribonuclease 7 large subunit (456 aa).

It belongs to the XseA family. As to quaternary structure, heterooligomer composed of large and small subunits.

It localises to the cytoplasm. The catalysed reaction is Exonucleolytic cleavage in either 5'- to 3'- or 3'- to 5'-direction to yield nucleoside 5'-phosphates.. Its function is as follows. Bidirectionally degrades single-stranded DNA into large acid-insoluble oligonucleotides, which are then degraded further into small acid-soluble oligonucleotides. The protein is Exodeoxyribonuclease 7 large subunit of Lactobacillus johnsonii (strain CNCM I-12250 / La1 / NCC 533).